Consider the following 850-residue polypeptide: Protein argonaute 8 (850 aa).

Residues 1–30 (MDTTLPPPQHMEREPLKSKSSLLPMTRRGN) form a disordered region. One can recognise a PAZ domain in the interval 247 to 361 (PVVDFLIANQ…FPIELCELVS (115 aa)). A Piwi domain is found at 518–811 (QSILGEVPPK…AAAQMATAMK (294 aa)).

This sequence belongs to the argonaute family. Ago subfamily.

Its function is as follows. Involved in RNA-mediated post-transcriptional gene silencing (PTGS). Main component of the RNA-induced silencing complex (RISC) that binds to a short guide RNA such as a microRNA (miRNA) or small interfering RNA (siRNA). RISC uses the mature miRNA or siRNA as a guide for slicer-directed cleavage of homologous mRNAs to repress gene expression. This chain is Protein argonaute 8 (AGO8), found in Arabidopsis thaliana (Mouse-ear cress).